Here is a 915-residue protein sequence, read N- to C-terminus: Isoleucine--tRNA ligase (915 aa).

The short motif at 58–68 (PYANGHLHIGH) is the 'HIGH' region element. Glu568 provides a ligand contact to L-isoleucyl-5'-AMP. Residues 609-613 (KMSKS) carry the 'KMSKS' region motif. Lys612 serves as a coordination point for ATP. Zn(2+) is bound by residues Cys892, Cys895, Cys907, and Cys910.

Belongs to the class-I aminoacyl-tRNA synthetase family. IleS type 1 subfamily. As to quaternary structure, monomer. It depends on Zn(2+) as a cofactor.

It localises to the cytoplasm. It carries out the reaction tRNA(Ile) + L-isoleucine + ATP = L-isoleucyl-tRNA(Ile) + AMP + diphosphate. Functionally, catalyzes the attachment of isoleucine to tRNA(Ile). As IleRS can inadvertently accommodate and process structurally similar amino acids such as valine, to avoid such errors it has two additional distinct tRNA(Ile)-dependent editing activities. One activity is designated as 'pretransfer' editing and involves the hydrolysis of activated Val-AMP. The other activity is designated 'posttransfer' editing and involves deacylation of mischarged Val-tRNA(Ile). In Wolinella succinogenes (strain ATCC 29543 / DSM 1740 / CCUG 13145 / JCM 31913 / LMG 7466 / NCTC 11488 / FDC 602W) (Vibrio succinogenes), this protein is Isoleucine--tRNA ligase.